Here is a 1125-residue protein sequence, read N- to C-terminus: Transient receptor potential cation channel subfamily A member 1 (1125 aa).

Residues M1–H721 are Cytoplasmic-facing. ANK repeat units follow at residues E63 to V94, Y98 to L127, N131 to L161, N165 to K194, W198 to Y227, K239 to M268, A272 to D301, N309 to S338, and E342 to I371. 5 disulfides stabilise this stretch: C193–C666, C463–C666, C609–C622, C622–C666, and C634–C859. P395 is modified (4-hydroxyproline; transient). ANK repeat units follow at residues D413–S442, D446–L475, H482–S511, N514–D543, and E548–L577. C415 and C422 together coordinate (E)-cinnamaldehyde. C622 is a binding site for (E)-cinnamaldehyde. Position 634 is a cysteine sulfenic acid (-SOH); transient; in hyperoxia (C634). The (E)-cinnamaldehyde site is built by C642, C666, and K712. The helical transmembrane segment at M722–I742 threads the bilayer. The Extracellular portion of the chain corresponds to Q743–T767. Residues N749 and N755 are each glycosylated (N-linked (GlcNAc...) asparagine). Residues L768–Y788 form a helical membrane-spanning segment. The Cytoplasmic portion of the chain corresponds to C789–Y806. 4 residues coordinate Ca(2+): E791, Q794, N808, and E811. A helical membrane pass occupies residues N807–L827. Residues D828 to Y832 lie on the Extracellular side of the membrane. A helical transmembrane segment spans residues M833–L853. Topologically, residues Q854–S876 are cytoplasmic. C859 carries the cysteine sulfenic acid (-SOH); transient; in hyperoxia modification. Residues T877–F897 traverse the membrane as a helical segment. Residues Q898 to P904 are Extracellular-facing. Residues L905–F925 constitute an intramembrane region (pore-forming). The Extracellular segment spans residues L926–P937. The helical transmembrane segment at V938–L959 threads the bilayer. Residues I960–I1125 are Cytoplasmic-facing. The stretch at M1044–K1073 forms a coiled coil. An a 1,2-diacyl-sn-glycero-3-phospho-(1D-myo-inositol)-binding site is contributed by K1048–K1054.

This sequence belongs to the transient receptor (TC 1.A.4) family. As to quaternary structure, homotetramer. Interacts with TMEM100. Interacts with EGLN1. Interacts with the scorpion wasabi receptor toxin at the same site that electrophiles but in a non-covalent manner. Post-translationally, TRPA1 activation by electrophiles occurs though covalent modification of specific cysteine residues in the N-terminal cytoplasmic domain. Hydroxylation is required for TRPA1 activity inhibition in normoxia. In hypoxia, the decrease in oxygen concentration diminishes the activity of the hydroxylase EGLN1, thus relieving TRPA1 from inhibition and ultimately leading to channel activation. In terms of processing, oxidation of Cys-634 and Cys-859 in hyperoxia may override the hydroxylase EGLN1-mediated inhibition, causing TRPA1 activation. In terms of tissue distribution, specifically expressed in a subset of nociceptive neurons. Expressed in dorsal root ganglia.

It is found in the cell membrane. It catalyses the reaction Ca(2+)(in) = Ca(2+)(out). The enzyme catalyses Mg(2+)(in) = Mg(2+)(out). It carries out the reaction Na(+)(in) = Na(+)(out). The catalysed reaction is K(+)(in) = K(+)(out). It catalyses the reaction Zn(2+)(in) = Zn(2+)(out). Its activity is regulated as follows. Electrophilic ligands activate the channel by covalent modification of intracellular cysteines; Cys-622 plays a key role in covalent binding of electrophiles. Extracellular Ca(2+) both potentiates and inactivates TRPA1; a rapid potentiation follows by slow desensitization. Activated by increase in intracellular Ca(2+) concentration. Inhibited by ruthenium red, a potent blocker of TRPV channels and selectively by A-967079. Activated by benzyl isothiocyanate (BITC), iodoacetamide, sulfhydryl reactive agent MTSEA, N-methyl maleimide (NMM), N-ethylmaleimide (NEM), and 2-aminoethyldiphenylborinate (2-APB). Also activated by hyperoxia. Acivated by intracellular Zn(2+). TRPA1 activation may critically depend on the presence of small intracellular compounds such as polyphosphates. In terms of biological role, ligand-activated Ca(2+)-permeable, nonselective cation channel. Involved in pain detection and possibly also in cold perception, oxygen concentration perception, cough, itch, and inner ear function. Has a relatively high Ca(2+) selectivity, with a preference for divalent over monovalent cations (Ca(2+) &gt; Ba(2+) &gt; Mg(2+) &gt; NH4(+) &gt; Li(+) &gt; K(+)), the influx of cation into the cytoplasm, leads to membrane depolarization. Has a central role in the pain response to endogenous inflammatory mediators, such as bradykinin and to a diverse array of irritants. Activated by a large variety of structurally unrelated electrophilic and non-electrophilic chemical compounds, such as allylthiocyanate (AITC) from mustard oil or wasabi, cinnamaldehyde, diallyl disulfide (DADS) from garlic, and acrolein, an environmental irritant. Electrophilic ligands activate TRPA1 by interacting with critical N-terminal Cys residues in a covalent manner. Non-electrophile agonists bind at distinct sites in the transmembrane domain to promote channel activation. Also acts as an ionotropic cannabinoid receptor by being activated by delta(9)-tetrahydrocannabinol (THC), the psychoactive component of marijuana. May be a component for the mechanosensitive transduction channel of hair cells in inner ear, thereby participating in the perception of sounds. This chain is Transient receptor potential cation channel subfamily A member 1, found in Rattus norvegicus (Rat).